A 515-amino-acid polypeptide reads, in one-letter code: ATP synthase subunit alpha (515 aa).

ATP is bound at residue 171 to 178 (GDRQTGKT).

This sequence belongs to the ATPase alpha/beta chains family. As to quaternary structure, F-type ATPases have 2 components, CF(1) - the catalytic core - and CF(0) - the membrane proton channel. CF(1) has five subunits: alpha(3), beta(3), gamma(1), delta(1), epsilon(1). CF(0) has three main subunits: a(1), b(2) and c(9-12). The alpha and beta chains form an alternating ring which encloses part of the gamma chain. CF(1) is attached to CF(0) by a central stalk formed by the gamma and epsilon chains, while a peripheral stalk is formed by the delta and b chains.

The protein localises to the cell inner membrane. It catalyses the reaction ATP + H2O + 4 H(+)(in) = ADP + phosphate + 5 H(+)(out). Produces ATP from ADP in the presence of a proton gradient across the membrane. The alpha chain is a regulatory subunit. The sequence is that of ATP synthase subunit alpha from Xylella fastidiosa (strain 9a5c).